An 873-amino-acid chain; its full sequence is Leucine--tRNA ligase (873 aa).

The short motif at proline 42–histidine 52 is the 'HIGH' region element. A 'KMSKS' region motif is present at residues lysine 628–serine 632. Residue lysine 631 participates in ATP binding.

Belongs to the class-I aminoacyl-tRNA synthetase family.

The protein resides in the cytoplasm. The enzyme catalyses tRNA(Leu) + L-leucine + ATP = L-leucyl-tRNA(Leu) + AMP + diphosphate. The polypeptide is Leucine--tRNA ligase (Aromatoleum aromaticum (strain DSM 19018 / LMG 30748 / EbN1) (Azoarcus sp. (strain EbN1))).